A 331-amino-acid chain; its full sequence is Laforin (331 aa).

The CBM20 domain maps to 1 to 124 (MRFRFGVVVP…NNLVDGVYCL (124 aa)). At serine 25 the chain carries Phosphoserine; by AMPK. Substrate-binding positions include tryptophan 32, lysine 87, 103-107 (GPHHD), aspartate 197, aspartate 235, and arginine 241. Residues 156–323 (HYSRILPNIW…QEDFFQKFGK (168 aa)) enclose the Tyrosine-protein phosphatase domain. Catalysis depends on cysteine 266, which acts as the Phosphocysteine intermediate. The short motif at 266–272 (CNAGVGR) is the Glucan phosphatase signature motif CXAGXGR element. Substrate is bound by residues 267–272 (NAGVGR) and tyrosine 304.

This sequence belongs to the protein-tyrosine phosphatase family. In terms of assembly, homodimer. Interacts with itself. Interacts with PPP1R3B, PPP1R3C, PPP1R3D, HIRIP5, and EPM2AIP1. Binds glycogen and Lafora bodies. Interacts with NHLRC1/malin (via the NHL repeats). Forms a complex with NHLRC1/malin and HSP70. Interacts with PPP1R3D; in the presence of NHLC1/malin the interaction leads to ubiquitination and autophagic degradation of PPP1R3D. Interacts (via the phosphatase domain) with MAPT/Tau; the interaction dephosphorylates MAPT. Isoform 1 and isoform 2 interact to form a heterodimeric complex that lacks phosphatase activity (in vitro). Active phosphatase isoform 7 and isoform 1 interact with each other, but give rise to lower phosphatase activity than isoform 1 or isoform 7 by themselves (in vitro). Active phosphatase isoform 7 and inactive isoform 2 interact with each other, but give rise to lower phosphatase activity than isoform 7 by itself (in vitro). Interacts with PRDM8. In terms of processing, polyubiquitinated by NHLRC1/malin. Phosphorylation on Ser-25 by AMPK affects the phosphatase activity of the enzyme and its ability to homodimerize and interact with NHLRC1, PPP1R3C or PRKAA2. In terms of tissue distribution, expressed in heart, skeletal muscle, kidney, pancreas and brain. Isoform 4 is also expressed in the placenta.

Its subcellular location is the cytoplasm. It is found in the endoplasmic reticulum membrane. The protein resides in the cell membrane. It localises to the nucleus. The enzyme catalyses O-phospho-L-tyrosyl-[protein] + H2O = L-tyrosyl-[protein] + phosphate. It carries out the reaction O-phospho-L-seryl-[protein] + H2O = L-seryl-[protein] + phosphate. It catalyses the reaction O-phospho-L-threonyl-[protein] + H2O = L-threonyl-[protein] + phosphate. Functionally, plays an important role in preventing glycogen hyperphosphorylation and the formation of insoluble aggregates, via its activity as glycogen phosphatase, and by promoting the ubiquitination of proteins involved in glycogen metabolism via its interaction with the E3 ubiquitin ligase NHLRC1/malin. Shows strong phosphatase activity towards complex carbohydrates in vitro, avoiding glycogen hyperphosphorylation which is associated with reduced branching and formation of insoluble aggregates. Dephosphorylates phosphotyrosine and synthetic substrates, such as para-nitrophenylphosphate (pNPP), and has low activity with phosphoserine and phosphothreonine substrates (in vitro). Has been shown to dephosphorylate MAPT. Forms a complex with NHLRC1/malin and HSP70, which suppresses the cellular toxicity of misfolded proteins by promoting their degradation through the ubiquitin-proteasome system (UPS). Acts as a scaffold protein to facilitate PPP1R3C/PTG ubiquitination by NHLRC1/malin. Also promotes proteasome-independent protein degradation through the macroautophagy pathway. Its function is as follows. Does not bind to glycogen. Lacks phosphatase activity and might function as a dominant-negative regulator for the phosphatase activity of isoform 1 and isoform 7. Has phosphatase activity (in vitro). The chain is Laforin (EPM2A) from Homo sapiens (Human).